The primary structure comprises 402 residues: Multidrug resistance protein MdtH (402 aa).

11 helical membrane passes run 13–33 (YFLLVDNMLVVLGFFVVFPLI), 34–54 (SIRFVDQMGWAALMVGIALGL), 99–116 (PWVLWLSCILSGLGGTLF), 139–159 (LLMMQDSAGAVIGALLGSWLL), 165–185 (LVCSAGAALFIACAAFNAWYL), 214–234 (VLTLTGYYMLAVQVMLMLPIM), 243–263 (AAVKWMYAIEATISLTLLYPI), 277–297 (LMAGLLVMTLAMLPIGMTSSL), 300–320 (LFTLICLFYIGSIIAEPARET), 340–360 (LGLAFGGALGYAGGGWLFDAG), and 368–388 (LPWLMLGAIGFITFLALWWQF).

Belongs to the major facilitator superfamily. DHA1 family. MdtH (TC 2.A.1.2.21) subfamily.

The protein resides in the cell inner membrane. This Klebsiella pneumoniae (strain 342) protein is Multidrug resistance protein MdtH.